Consider the following 77-residue polypeptide: Neurexophilin-4 (77 aa).

Residues 1–77 (NCHVEYEKTN…NFQSEHPYFG (77 aa)) form a v (Cys-rich) region.

The protein belongs to the neurexophilin family. In terms of processing, may be proteolytically processed at the boundary between the N-terminal non-conserved and the central conserved domain in neuron-like cells.

Its subcellular location is the secreted. In terms of biological role, may be signaling molecules that resemble neuropeptides and that act by binding to alpha-neurexins and possibly other receptors. In Macaca mulatta (Rhesus macaque), this protein is Neurexophilin-4 (NXPH4).